A 3010-amino-acid chain; its full sequence is Probable polyketide synthase 2 (3010 aa).

The Ketosynthase family 3 (KS3) domain occupies 9-432; that stretch reads SRDVAVIGIG…GSNACLLLSE (424 aa). Catalysis depends on for beta-ketoacyl synthase activity residues C174, H313, and H353. The acyl/malonyl transferase stretch occupies residues 629–662; that stretch reads GINPSINVGHSFGEISSACCSGMLDLETACFIVY. The active-site For acyl/malonyl transferase activity is S639. An N-terminal hotdog fold region spans residues 944 to 1063; the sequence is ATQLGYRNDV…ARFSVLKHNS (120 aa). The PKS/mFAS DH domain maps to 944-1235; sequence ATQLGYRNDV…YSSISTDIKN (292 aa). H976 acts as the Proton acceptor; for dehydratase activity in catalysis. Residues 1080–1235 are C-terminal hotdog fold; that stretch reads NWTTIKRKEF…YSSISTDIKN (156 aa). The Proton donor; for dehydratase activity role is filled by D1146. A Carrier domain is found at 2482 to 2559; sequence DNELSIRDDI…QLIQAVIQAV (78 aa). An O-(pantetheine 4'-phosphoryl)serine modification is found at S2519.

Pantetheine 4'-phosphate is required as a cofactor.

Functionally, probable polyketide synthase. In Dictyostelium discoideum (Social amoeba), this protein is Probable polyketide synthase 2 (pks2).